Consider the following 530-residue polypeptide: TNF receptor-associated factor 6 (530 aa).

Residues 1–362 (MSLLNCENSC…EAQQCNGIYI (362 aa)) form an interaction with TAX1BP1 region. The RING-type; degenerate zinc-finger motif lies at 70 to 109 (CPICLMALREAVQTPCGHRFCKACITKSIRDAGHKCPVDN). A Glycyl lysine isopeptide (Lys-Gly) (interchain with G-Cter in SUMO); alternate cross-link involves residue Lys124. Lys124 is covalently cross-linked (Glycyl lysine isopeptide (Lys-Gly) (interchain with G-Cter in ubiquitin); alternate). A Glycyl lysine isopeptide (Lys-Gly) (interchain with G-Cter in SUMO) cross-link involves residue Lys142. 2 consecutive TRAF-type zinc fingers follow at residues 150-202 (DHQV…EEKE) and 203-259 (IHDQ…NHLA). Residues 302–356 (NYEETVKQLEGRLVRQDHQIRELTAKMETQSMHVSELKRTIRSLEDKVAEMEAQQ) are a coiled coil. A Glycyl lysine isopeptide (Lys-Gly) (interchain with G-Cter in ubiquitin) cross-link involves residue Lys327. In terms of domain architecture, MATH spans 358–507 (NGIYIWKIGN…DDTLLVRCEV (150 aa)). The segment at 363–530 (WKIGNFGMHL…FQPRSTDAGV (168 aa)) is interaction with TANK. Lys461 participates in a covalent cross-link: Glycyl lysine isopeptide (Lys-Gly) (interchain with G-Cter in SUMO).

It belongs to the TNF receptor-associated factor family. A subfamily. Homotrimer. Homooligomer. N-terminal region is dimeric while C-terminal region is trimeric; maybe providing a mode of oligomerization. Upon IL1B treatment, forms a complex with PELI1, IRAK1, IRAK4 and MYD88; this complex recruits MAP3K7/TAK1, TAB1 and TAB2 to mediate NF-kappa-B activation. Direct binding of SMAD6 to PELI1 prevents the complex formation and hence negatively regulates IL1R-TLR signaling and eventually NF-kappa-B-mediated gene expression. Binds to TNFRSF5/CD40 and TNFRSF11A/RANK. Associates with NGFR, TNFRSF17, IRAK2, IRAK3, RIPK2, MAP3K1, MAP3K5, MAP3K14, CSK, TRAF, TRAF-interacting protein TRIP and TNF receptor associated protein TDP2. Interacts with IL17R. Interacts with SQSTM1 bridging NTRK1 and NGFR. Forms a ternary complex with SQSTM1 and PRKCZ. Interacts with PELI2 and PELI3. Binds UBE2V1. Interacts with TAX1BP1; this interaction mediates deubiquitination of TRAF6 and inhibition of NF-kappa-B activation. Interacts with ZNF675. Interacts with ARRB1 and ARRB2. Interacts with MAP3K7 and TAB1/MAP3K7IP1; during IL-1 signaling. Interacts with UBE2N. Interacts with TGFBR1, HDAC1 and RANGAP1. Interacts with AKT1, AKT2 and AKT3. Interacts (via TRAF domains) with NUMBL (via C-terminal). Interacts with RBCK1. Interacts with LIMD1 (via LIM domains). Interacts with RSAD2/viperin. Interacts (via C-terminus) with EIF2AK2/PKR (via the kinase catalytic domain). Interacts with ZFAND5. Interacts with IL1RL1. Interacts with TRAFD1. Interacts with AJUBA. Interacts with MAVS/IPS1. Interacts (via TRAF domains) with DYNC2I2 (via WD domains). Interacts with IFIT3 (via N-terminus). Interacts with TICAM2. Interacts with CARD14. Interacts with CD40 and MAP3K8; the interaction is required for ERK activation. Interacts with TICAM1 and this interaction is enhanced in the presence of WDFY1. Interacts with TANK; this interaction increases in response to DNA damage. Interacts with USP10; this interaction increases in response to DNA damage. Interacts with ZC3H12A; this interaction increases in response to DNA damage and is stimulated by TANK. Interacts with WDFY3. Interacts with TRIM13. Interacts with GPS2. Interacts (via C-terminus) with SASH1. Interacts with LRRC19. Interacts with IL17RA and TRAF3IP2. Interacts with TOMM70. Interacts with AMBRA1; interaction is required to mediate 'Lys-63'-linked ubiquitination of ULK1. Interacts with CRBN; this interaction inhibits TLR4-mediated signaling by preventing TRAF6-mediated ubiquitination of ECSIT. In terms of processing, sumoylated on Lys-124, Lys-142 and Lys-461 with SUMO1. Polyubiquitinated on Lys-124 by TRAF3IP2; after cell stimulation with IL17A. Polyubiquitinated; after cell stimulation with IL1B or TGFB. This ligand-induced cell stimulation leads to dimerization/oligomerization of TRAF6 molecules, followed by auto-ubiquitination which involves UBE2N and UBE2V1 and leads to TRAF6 activation. This 'Lys-63' site-specific poly-ubiquitination appears to be associated with the activation of signaling molecules. Endogenous autoubiquitination occurs only for the cytoplasmic form. Deubiquitinated by USP10 in a TANK-dependent manner, leading to the negative regulation of NF-kappa-B signaling upon DNA damage. LRRC19 induces 'Lys-63' ubiquitination. Ubiquitinated at Lys-327 by the SCF(FBXL2) complex, leading to its degradation by the proteasome.

The protein resides in the cytoplasm. Its subcellular location is the cell cortex. It is found in the nucleus. The protein localises to the lipid droplet. The catalysed reaction is S-ubiquitinyl-[E2 ubiquitin-conjugating enzyme]-L-cysteine + [acceptor protein]-L-lysine = [E2 ubiquitin-conjugating enzyme]-L-cysteine + N(6)-ubiquitinyl-[acceptor protein]-L-lysine.. The protein operates within protein modification; protein ubiquitination. Functionally, E3 ubiquitin ligase that, together with UBE2N and UBE2V1, mediates the synthesis of 'Lys-63'-linked-polyubiquitin chains conjugated to proteins, such as ECSIT, IKBKG, IRAK1, AKT1 and AKT2. Also mediates ubiquitination of free/unanchored polyubiquitin chain that leads to MAP3K7 activation. Leads to the activation of NF-kappa-B and JUN. Seems to also play a role in dendritic cells (DCs) maturation and/or activation. Represses c-Myb-mediated transactivation, in B-lymphocytes. Adapter protein that seems to play a role in signal transduction initiated via TNF receptor, IL-1 receptor and IL-17 receptor. Regulates osteoclast differentiation by mediating the activation of adapter protein complex 1 (AP-1) and NF-kappa-B, in response to RANK-L stimulation. Together with MAP3K8, mediates CD40 signals that activate ERK in B-cells and macrophages, and thus may play a role in the regulation of immunoglobulin production. Acts as a regulator of the JNK and NF-kappa-B signaling pathways by initiating assembly of heterotypic 'Lys-63'-/'Lys-48'-linked branched ubiquitin chains that are then recognized by TAB2: TRAF6 catalyzes initial 'Lys-63'-linked-polyubiquitin chains that are then branched via 'Lys-48'-linked polyubiquitin by HUWE1. 'Lys-63'-/'Lys-48'-linked branched ubiquitin chains protect 'Lys-63'-linkages from CYLD deubiquitination. Also participates in the TCR signaling by ubiquitinating LAT. The chain is TNF receptor-associated factor 6 (Traf6) from Rattus norvegicus (Rat).